Reading from the N-terminus, the 327-residue chain is Transaldolase (327 aa).

The active-site Schiff-base intermediate with substrate is the Lys-132.

Belongs to the transaldolase family. Type 1 subfamily. As to quaternary structure, homodimer.

It localises to the cytoplasm. The enzyme catalyses D-sedoheptulose 7-phosphate + D-glyceraldehyde 3-phosphate = D-erythrose 4-phosphate + beta-D-fructose 6-phosphate. The protein operates within carbohydrate degradation; pentose phosphate pathway; D-glyceraldehyde 3-phosphate and beta-D-fructose 6-phosphate from D-ribose 5-phosphate and D-xylulose 5-phosphate (non-oxidative stage): step 2/3. Functionally, transaldolase is important for the balance of metabolites in the pentose-phosphate pathway. The sequence is that of Transaldolase from Chlamydia felis (strain Fe/C-56) (Chlamydophila felis).